The sequence spans 317 residues: Beta-ketoacyl-[acyl-carrier-protein] synthase III (317 aa).

Active-site residues include C112 and H244. The tract at residues 245–249 (QANLR) is ACP-binding. Residue N274 is part of the active site.

Belongs to the thiolase-like superfamily. FabH family. As to quaternary structure, homodimer.

The protein resides in the cytoplasm. It carries out the reaction malonyl-[ACP] + acetyl-CoA + H(+) = 3-oxobutanoyl-[ACP] + CO2 + CoA. It functions in the pathway lipid metabolism; fatty acid biosynthesis. Functionally, catalyzes the condensation reaction of fatty acid synthesis by the addition to an acyl acceptor of two carbons from malonyl-ACP. Catalyzes the first condensation reaction which initiates fatty acid synthesis and may therefore play a role in governing the total rate of fatty acid production. Possesses both acetoacetyl-ACP synthase and acetyl transacylase activities. Its substrate specificity determines the biosynthesis of branched-chain and/or straight-chain of fatty acids. The protein is Beta-ketoacyl-[acyl-carrier-protein] synthase III of Blochmanniella pennsylvanica (strain BPEN).